The primary structure comprises 228 residues: Probable calcium-binding protein CML48 (228 aa).

EF-hand domains are found at residues 52–87 (ETHP…SGYD) and 121–156 (NCLA…LGCV). Ca(2+) contacts are provided by Asp-65, Asn-67, Ser-69, and Glu-76.

Functionally, potential calcium sensor. In Arabidopsis thaliana (Mouse-ear cress), this protein is Probable calcium-binding protein CML48 (CML48).